A 130-amino-acid chain; its full sequence is Mating-type-like protein A1 (130 aa).

The homeobox DNA-binding region spans 68–127 (TYTTRKPLPAKAKLQLVETFSKKRYLTRCEKHQLAVQCGITTNQVQIWFANRRKRSKDLN).

It belongs to the MATA1 family.

The protein localises to the nucleus. Mating type proteins are sequence specific DNA-binding proteins that act as master switches in yeast differentiation by controlling gene expression in a cell type-specific fashion. The polypeptide is Mating-type-like protein A1 (MTL1A1) (Candida glabrata (strain ATCC 2001 / BCRC 20586 / JCM 3761 / NBRC 0622 / NRRL Y-65 / CBS 138) (Yeast)).